A 161-amino-acid chain; its full sequence is Serine-protein kinase RsbW (161 aa).

The protein belongs to the anti-sigma-factor family.

It catalyses the reaction L-seryl-[protein] + ATP = O-phospho-L-seryl-[protein] + ADP + H(+). It carries out the reaction L-threonyl-[protein] + ATP = O-phospho-L-threonyl-[protein] + ADP + H(+). In terms of biological role, negative regulator of sigma-B activity. Phosphorylates and inactivates its specific antagonist protein, RsbV. Upon phosphorylation of RsbV, RsbW is released and binds to sigma-B, thereby blocking its ability to form an RNA polymerase holoenzyme (E-sigma-B). The protein is Serine-protein kinase RsbW of Bacillus licheniformis (strain ATCC 14580 / DSM 13 / JCM 2505 / CCUG 7422 / NBRC 12200 / NCIMB 9375 / NCTC 10341 / NRRL NRS-1264 / Gibson 46).